A 955-amino-acid polypeptide reads, in one-letter code: Protein translocase subunit SecA (955 aa).

ATP contacts are provided by residues glutamine 87, glycine 105–threonine 109, and aspartate 494. Residues alanine 861 to arginine 955 form a disordered region. Positions glutamine 874 to alanine 888 are enriched in low complexity. Over residues serine 943–arginine 955 the composition is skewed to basic residues.

It belongs to the SecA family. Monomer and homodimer. Part of the essential Sec protein translocation apparatus which comprises SecA, SecYEG and auxiliary proteins SecDF. Other proteins may also be involved.

The protein resides in the cell membrane. The protein localises to the cytoplasm. The enzyme catalyses ATP + H2O + cellular proteinSide 1 = ADP + phosphate + cellular proteinSide 2.. In terms of biological role, part of the Sec protein translocase complex. Interacts with the SecYEG preprotein conducting channel. Has a central role in coupling the hydrolysis of ATP to the transfer of proteins into and across the cell membrane, serving as an ATP-driven molecular motor driving the stepwise translocation of polypeptide chains across the membrane. This is Protein translocase subunit SecA from Rhodococcus opacus (strain B4).